Here is a 212-residue protein sequence, read N- to C-terminus: Thymidylate kinase (212 aa).

10–17 lines the ATP pocket; sequence GPDGAGKT.

It belongs to the thymidylate kinase family.

It carries out the reaction dTMP + ATP = dTDP + ADP. Functionally, phosphorylation of dTMP to form dTDP in both de novo and salvage pathways of dTTP synthesis. The protein is Thymidylate kinase of Exiguobacterium sibiricum (strain DSM 17290 / CCUG 55495 / CIP 109462 / JCM 13490 / 255-15).